The following is a 247-amino-acid chain: Ubiquinone biosynthesis O-methyltransferase (247 aa).

Residues Arg39, Gly70, Asp91, and Met134 each contribute to the S-adenosyl-L-methionine site.

It belongs to the methyltransferase superfamily. UbiG/COQ3 family.

It catalyses the reaction a 3-demethylubiquinol + S-adenosyl-L-methionine = a ubiquinol + S-adenosyl-L-homocysteine + H(+). The catalysed reaction is a 3-(all-trans-polyprenyl)benzene-1,2-diol + S-adenosyl-L-methionine = a 2-methoxy-6-(all-trans-polyprenyl)phenol + S-adenosyl-L-homocysteine + H(+). It participates in cofactor biosynthesis; ubiquinone biosynthesis. In terms of biological role, O-methyltransferase that catalyzes the 2 O-methylation steps in the ubiquinone biosynthetic pathway. The sequence is that of Ubiquinone biosynthesis O-methyltransferase from Cereibacter sphaeroides (strain KD131 / KCTC 12085) (Rhodobacter sphaeroides).